A 310-amino-acid chain; its full sequence is Putative F-box protein PP2-B2 (310 aa).

Positions 1–34 (MIQSTMGHKQSVDSRGKGRKVPGSSSMVQKHRVE) are disordered. An F-box domain is found at 44-90 (PSLFDNLPEDCISNIISFTSPRDACVAASVSKTFESAVNSDSVWDKF).

This chain is Putative F-box protein PP2-B2 (PP2B2), found in Arabidopsis thaliana (Mouse-ear cress).